The sequence spans 586 residues: uncharacterized protein (586 aa).

One can recognise an ABC transmembrane type-1 domain in the interval 29-312; it reads YGIAIGSMVV…LARMRISLES (284 aa). The next 4 helical transmembrane spans lie at 30–50, 66–86, 162–184, and 256–276; these read GIAI…AWIM, VFGV…ATYV, MVIQ…ILGV, and IMET…GVLV. The region spanning 346-580 is the ABC transporter domain; that stretch reads IRFKDVNFSY…DGVYRRLYEL (235 aa). ATP is bound at residue 379-386; sequence GPSGAGKS.

It belongs to the ABC transporter superfamily.

The protein localises to the cell membrane. This is an uncharacterized protein from Sinorhizobium fredii (strain NBRC 101917 / NGR234).